The sequence spans 1394 residues: Kinesin-like protein KIF27 (1394 aa).

Positions 5-341 constitute a Kinesin motor domain; sequence PIKVAVRIRP…LKYANRARNI (337 aa). ATP is bound at residue 84-91; the sequence is GQTGSGKT. Coiled coils occupy residues 352-418 and 498-554; these read QADR…IEQA and QKDL…ELAK. Disordered regions lie at residues 559–582 and 642–665; these read VPTS…RPHT and FSDN…RSHS. The segment covering 571–580 has biased composition (basic and acidic residues); sequence PDARASEKRP. 5 positions are modified to phosphoserine: serine 643, serine 646, serine 672, serine 675, and serine 704. Coiled coils occupy residues 709–891, 921–1078, 1118–1152, and 1186–1226; these read LQKL…GQGE, LDEQ…SIQS, NKVI…HELE, and DQDG…RLKD. Residues 886 to 916 form a disordered region; sequence KAGQGEGLNPKAEDQDGFNLNRRKSPFRSGD. At serine 999 the chain carries Phosphoserine. Residues 1267–1280 are compositionally biased toward basic and acidic residues; that stretch reads TENTKLNGSEREVD. 2 disordered regions span residues 1267 to 1319 and 1325 to 1344; these read TENT…LQSI and ARPF…PVRS. Composition is skewed to polar residues over residues 1281–1295 and 1309–1319; these read NSSS…TQQI and IAPSSGQLQSI. Serine 1365 and serine 1387 each carry phosphoserine.

It belongs to the TRAFAC class myosin-kinesin ATPase superfamily. Kinesin family. KIF27 subfamily. As to quaternary structure, interacts with STK36.

It localises to the cytoplasm. The protein resides in the cytoskeleton. The protein localises to the cell projection. It is found in the cilium. Its function is as follows. Plays an essential role in motile ciliogenesis. The chain is Kinesin-like protein KIF27 (Kif27) from Mus musculus (Mouse).